The following is a 349-amino-acid chain: DNA polymerase IV (349 aa).

The region spanning 7–188 is the UmuC domain; that stretch reads IIHIDMDYFF…LPVKKLFGVG (182 aa). Mg(2+) contacts are provided by Asp11 and Asp106. Glu107 is an active-site residue.

It belongs to the DNA polymerase type-Y family. Monomer. Mg(2+) serves as cofactor.

The protein resides in the cytoplasm. The enzyme catalyses DNA(n) + a 2'-deoxyribonucleoside 5'-triphosphate = DNA(n+1) + diphosphate. In terms of biological role, poorly processive, error-prone DNA polymerase involved in untargeted mutagenesis. Copies undamaged DNA at stalled replication forks, which arise in vivo from mismatched or misaligned primer ends. These misaligned primers can be extended by PolIV. Exhibits no 3'-5' exonuclease (proofreading) activity. May be involved in translesional synthesis, in conjunction with the beta clamp from PolIII. This Francisella tularensis subsp. novicida (strain U112) protein is DNA polymerase IV.